The primary structure comprises 228 residues: L-ribulose-5-phosphate 4-epimerase UlaF (228 aa).

Residues 26-27 (GN), 43-44 (SG), and 72-73 (SS) each bind substrate. D74, H93, and H95 together coordinate Zn(2+). The active-site Proton donor/acceptor is the D118. Zn(2+) is bound at residue H167. Y225 serves as the catalytic Proton donor/acceptor.

This sequence belongs to the aldolase class II family. AraD/FucA subfamily. The cofactor is Zn(2+).

It carries out the reaction L-ribulose 5-phosphate = D-xylulose 5-phosphate. It participates in cofactor degradation; L-ascorbate degradation; D-xylulose 5-phosphate from L-ascorbate: step 4/4. Functionally, catalyzes the isomerization of L-ribulose 5-phosphate to D-xylulose 5-phosphate. Is involved in the anaerobic L-ascorbate utilization. The polypeptide is L-ribulose-5-phosphate 4-epimerase UlaF (Shigella dysenteriae serotype 1 (strain Sd197)).